The following is a 547-amino-acid chain: Riboflavin transporter RibJ (547 aa).

At 1–11 (MLPSFTRKPAD) the chain is on the cytoplasmic side. Residues 12–32 (HPIGYLVALSGLLMQLMSYGI) traverse the membrane as a helical segment. The Extracellular segment spans residues 33–58 (DNSYSIFSEDMHNDPSLGFPSITAIS). The chain crosses the membrane as a helical span at residues 59 to 79 (LGNSVSLGLSPAFGVLAGFCV). The Cytoplasmic segment spans residues 80–85 (DRLPPR). The helical transmembrane segment at 86 to 106 (FMMALSTILLFTGLWISSTLA) threads the bilayer. Topologically, residues 107–108 (AN) are extracellular. Residues 109–129 (IYVVTFTYCLFASIGTACMLS) form a helical membrane-spanning segment. Topologically, residues 130 to 144 (PGAAATSSWFNRYQG) are cytoplasmic. The chain crosses the membrane as a helical span at residues 145–165 (LAMGINFAGGGIGSAIIPPLA). The Extracellular portion of the chain corresponds to 166 to 175 (GKWVVAYGWR). Residues 176–196 (KAFQLMSIFCAIGVLATALSA) traverse the membrane as a helical segment. Residues 197–344 (RRREPKRDDS…MFTLPFMGNF (148 aa)) are Cytoplasmic-facing. The disordered stretch occupies residues 198 to 293 (RREPKRDDSS…EGLDVTEQSQ (96 aa)). The segment covering 244–255 (NEGKEDVREMGR) has biased composition (basic and acidic residues). A helical transmembrane segment spans residues 345 to 365 (LCWFIYSWAFYSLIYAAVPYI). At 366-386 (SSMGKPGTVYAGVPPIPTDVA) the chain is on the extracellular side. A helical membrane pass occupies residues 387–407 (ATLFTFYGVFQVVGSVLVGWL). Residues 408–412 (ASLVT) lie on the Cytoplasmic side of the membrane. A helical transmembrane segment spans residues 413-433 (AEFAYVFCATVGGIGCGLLAL). Residues 434–437 (GRSY) are Extracellular-facing. Residues 438-458 (VAFALLLCIIGFCMAGMFAVM) traverse the membrane as a helical segment. Residues 459–470 (PTLIATHLYGPN) are Cytoplasmic-facing. The helical transmembrane segment at 471–491 (LGFYFGAVFLAGVVGGFVAPP) threads the bilayer. Residues 492–505 (MQATIQLRNNGSYA) lie on the Extracellular side of the membrane. N-linked (GlcNAc...) asparagine glycosylation is present at Asn-501. A helical membrane pass occupies residues 506–526 (FVCVVMSVSMTLSALVCYATL). Residues 527–547 (WRSKRSGIVLAARKTKLVEIM) lie on the Cytoplasmic side of the membrane.

This sequence belongs to the major facilitator superfamily. RibJ family.

It localises to the cell membrane. Its function is as follows. Transporter involved in riboflavin (vitamin B2) uptake. Also transports FMN and FAD. This chain is Riboflavin transporter RibJ, found in Trypanosoma brucei brucei (strain 927/4 GUTat10.1).